Consider the following 4450-residue polypeptide: Gramicidin S synthase 2 (4450 aa).

The segment at 467–1044 (DKTIHQLFTE…IQEISNYING (578 aa)) is domain 1 (proline-activating). 4 consecutive Carrier domains span residues 971–1046 (VPTN…NGAK), 2006–2081 (APSS…ADGE), 3051–3126 (APRT…EETD), and 4089–4164 (APRN…THQE). O-(pantetheine 4'-phosphoryl)serine is present on residues serine 1006, serine 2041, serine 3086, and serine 4124. The segment at 1521–2080 (DHVAVGWKDQ…SALAQYIADG (560 aa)) is domain 2 (valine-activating). Positions 2538–3134 (YATNKIFHEL…TDTEQYMAIQ (597 aa)) are domain 3 (ornithine-activating). Positions 3590–4172 (IQELFEEQVK…QESENNVHQP (583 aa)) are domain 4 (leucine-activating).

The protein belongs to the ATP-dependent AMP-binding enzyme family. As to quaternary structure, large multienzyme complex of GrsA and GrsB. Requires pantetheine 4'-phosphate as cofactor.

Its pathway is antibiotic biosynthesis; gramicidin S biosynthesis. In terms of biological role, this protein is a multifunctional enzyme, able to activate and polymerize the amino acids Pro, Val, Orn and Leu. Activation sites for these AA consist of individual domains. This is Gramicidin S synthase 2 (grsB) from Brevibacillus brevis (Bacillus brevis).